The sequence spans 309 residues: D-alanine--D-alanine ligase (309 aa).

The ATP-grasp domain maps to 104-306 (KLLWQSFNLP…YQILVQKILE (203 aa)). 137 to 192 (ISLLGLPIIVKPNQEGSSIGITIVYSYETLYKACKTAFIFDNSILIEKFIYGEEYT) lines the ATP pocket. 3 residues coordinate Mg(2+): aspartate 260, glutamate 273, and asparagine 275.

Belongs to the D-alanine--D-alanine ligase family. Requires Mg(2+) as cofactor. It depends on Mn(2+) as a cofactor.

The protein localises to the cytoplasm. It catalyses the reaction 2 D-alanine + ATP = D-alanyl-D-alanine + ADP + phosphate + H(+). It participates in cell wall biogenesis; peptidoglycan biosynthesis. Its function is as follows. Cell wall formation. The polypeptide is D-alanine--D-alanine ligase (Buchnera aphidicola subsp. Baizongia pistaciae (strain Bp)).